The following is a 133-amino-acid chain: MSLSDPIADFLTRLRNGQAGMNKVVYVPCSKVVMAVLRILVEEGYIESFTEEVRGDSGIKVLKVFLKYFNSAAAIRKIVRVSRPGKRVYSSADKMPRFYNALGIYIVSTSKGIMLDSHARNAGVGGEILCGVF.

Belongs to the universal ribosomal protein uS8 family. Part of the 30S ribosomal subunit. Contacts proteins S5 and S12.

One of the primary rRNA binding proteins, it binds directly to 16S rRNA central domain where it helps coordinate assembly of the platform of the 30S subunit. This is Small ribosomal subunit protein uS8 from Anaplasma phagocytophilum (strain HZ).